The following is a 470-amino-acid chain: E3 SUMO-protein ligase EGR2 (470 aa).

Low complexity predominate over residues 126-141; the sequence is PPASTTASSSVTSASP. 3 disordered regions span residues 126–153, 159–178, and 184–211; these read PPAS…GVCT, PELD…SGCT, and DPSA…YPSP. An N6-acetyllysine; by EP300 modification is found at Lys247. A disordered region spans residues 275 to 344; the sequence is GPSAGVTGPG…RPYPCPAEGC (70 aa). Residues 281 to 291 are compositionally biased toward gly residues; it reads TGPGASGGGEG. 3 consecutive C2H2-type zinc fingers follow at residues 337-361, 367-389, and 395-417; these read YPCP…IRIH, FQCR…IRTH, and FACD…TKIH. The disordered stretch occupies residues 408-470; the sequence is DERKRHTKIH…ASCTSRTRTP (63 aa). A compositionally biased stretch (basic residues) spans 412–422; that stretch reads RHTKIHLRQKE. Over residues 426-439 the composition is skewed to low complexity; the sequence is SAPSSSASAQSSAS. Residues 440–450 are compositionally biased toward gly residues; that stretch reads GPGGSQAGGSL.

The protein belongs to the EGR C2H2-type zinc-finger protein family. Interacts with HCFC1. Interacts with WWP2. Interacts with UBC9. Interacts with CITED1. Interacts (via phosphorylated form) with SFN. In terms of processing, ubiquitinated by WWP2 leading to proteasomal degradation. Acetylated at Lys-247. May be deacetylated by HDAC6, HDAC10 or SIRT1.

It localises to the nucleus. It participates in protein modification; protein sumoylation. Sequence-specific DNA-binding transcription factor. Plays a role in hindbrain segmentation by regulating the expression of a subset of homeobox containing genes and in Schwann cell myelination by regulating the expression of genes involved in the formation and maintenance of myelin. Binds to two EGR2-consensus sites EGR2A (5'-CTGTAGGAG-3') and EGR2B (5'-ATGTAGGTG-3') in the HOXB3 enhancer and promotes HOXB3 transcriptional activation. Binds to specific DNA sites located in the promoter region of HOXA4, HOXB2 and ERBB2. Regulates hindbrain segmentation by controlling the expression of Hox genes, such as HOXA4, HOXB3 and HOXB2, and thereby specifying odd and even rhombomeres. Promotes the expression of HOXB3 in the rhombomere r5 in the hindbrain. Regulates myelination in the peripheral nervous system after birth, possibly by regulating the expression of myelin proteins, such as MPZ, and by promoting the differentiation of Schwann cells. Involved in the development of the jaw openener musculature, probably by playing a role in its innervation through trigeminal motor neurons. May play a role in adipogenesis, possibly by regulating the expression of CEBPB. Its function is as follows. E3 SUMO-protein ligase helping SUMO1 conjugation to its coregulators NAB1 and NAB2, whose sumoylation down-regulates EGR2 transcriptional activity. This Rattus norvegicus (Rat) protein is E3 SUMO-protein ligase EGR2 (Egr2).